A 558-amino-acid chain; its full sequence is Glucose-6-phosphate isomerase (558 aa).

Residue glutamate 363 is the Proton donor of the active site. Residues histidine 394 and lysine 522 contribute to the active site.

It belongs to the GPI family.

It localises to the cytoplasm. It catalyses the reaction alpha-D-glucose 6-phosphate = beta-D-fructose 6-phosphate. It participates in carbohydrate biosynthesis; gluconeogenesis. It functions in the pathway carbohydrate degradation; glycolysis; D-glyceraldehyde 3-phosphate and glycerone phosphate from D-glucose: step 2/4. In terms of biological role, catalyzes the reversible isomerization of glucose-6-phosphate to fructose-6-phosphate. This is Glucose-6-phosphate isomerase from Blochmanniella floridana.